Consider the following 60-residue polypeptide: UPF0434 protein KPK_3615 (60 aa).

It belongs to the UPF0434 family.

This Klebsiella pneumoniae (strain 342) protein is UPF0434 protein KPK_3615.